Here is a 266-residue protein sequence, read N- to C-terminus: Hydroxyethylthiazole kinase (266 aa).

Residue Met46 participates in substrate binding. ATP contacts are provided by Arg122 and Ser168. Gly195 is a substrate binding site.

Belongs to the Thz kinase family. Requires Mg(2+) as cofactor.

It catalyses the reaction 5-(2-hydroxyethyl)-4-methylthiazole + ATP = 4-methyl-5-(2-phosphooxyethyl)-thiazole + ADP + H(+). It participates in cofactor biosynthesis; thiamine diphosphate biosynthesis; 4-methyl-5-(2-phosphoethyl)-thiazole from 5-(2-hydroxyethyl)-4-methylthiazole: step 1/1. Catalyzes the phosphorylation of the hydroxyl group of 4-methyl-5-beta-hydroxyethylthiazole (THZ). In Oleidesulfovibrio alaskensis (strain ATCC BAA-1058 / DSM 17464 / G20) (Desulfovibrio alaskensis), this protein is Hydroxyethylthiazole kinase.